The sequence spans 66 residues: Large ribosomal subunit protein uL30 (66 aa).

The protein belongs to the universal ribosomal protein uL30 family. Part of the 50S ribosomal subunit.

This chain is Large ribosomal subunit protein uL30, found in Chloroherpeton thalassium (strain ATCC 35110 / GB-78).